The chain runs to 462 residues: uncharacterized protein (462 aa).

Transmembrane regions (helical) follow at residues 12–32 and 257–277; these read WWWL…APTV and GLCV…LELV.

Belongs to the HHV-5 US29 protein family.

Its subcellular location is the host membrane. This is an uncharacterized protein from Homo sapiens (Human).